The following is a 177-amino-acid chain: Inorganic pyrophosphatase (177 aa).

3 residues coordinate substrate: K30, R44, and Y56. 3 residues coordinate Mg(2+): D66, D71, and D103. Substrate is bound at residue Y142.

The protein belongs to the PPase family. In terms of assembly, homohexamer. Requires Mg(2+) as cofactor.

The protein localises to the cytoplasm. It catalyses the reaction diphosphate + H2O = 2 phosphate + H(+). In terms of biological role, catalyzes the hydrolysis of inorganic pyrophosphate (PPi) forming two phosphate ions. This Caulobacter vibrioides (strain ATCC 19089 / CIP 103742 / CB 15) (Caulobacter crescentus) protein is Inorganic pyrophosphatase.